The chain runs to 290 residues: ATP synthase gamma chain (290 aa).

The protein belongs to the ATPase gamma chain family. F-type ATPases have 2 components, CF(1) - the catalytic core - and CF(0) - the membrane proton channel. CF(1) has five subunits: alpha(3), beta(3), gamma(1), delta(1), epsilon(1). CF(0) has three main subunits: a, b and c.

It is found in the cell membrane. In terms of biological role, produces ATP from ADP in the presence of a proton gradient across the membrane. The gamma chain is believed to be important in regulating ATPase activity and the flow of protons through the CF(0) complex. This is ATP synthase gamma chain from Buchnera aphidicola subsp. Diuraphis noxia.